The following is a 223-amino-acid chain: Imidazoleglycerol-phosphate dehydratase (223 aa).

This sequence belongs to the imidazoleglycerol-phosphate dehydratase family.

The enzyme catalyses D-erythro-1-(imidazol-4-yl)glycerol 3-phosphate = 3-(imidazol-4-yl)-2-oxopropyl phosphate + H2O. Its pathway is amino-acid biosynthesis; L-histidine biosynthesis; L-histidine from 5-phospho-alpha-D-ribose 1-diphosphate: step 6/9. The polypeptide is Imidazoleglycerol-phosphate dehydratase (HIS3) (Candida albicans (Yeast)).